We begin with the raw amino-acid sequence, 194 residues long: E3 ubiquitin-protein ligase RNF4 (194 aa).

Basic residues predominate over residues 1–12 (MSTRNPQRKRRG). Residues 1–20 (MSTRNPQRKRRGGAVNSRQT) are required for ubiquitination activity. The disordered stretch occupies residues 1-36 (MSTRNPQRKRRGGAVNSRQTQKRTRETTSTPEISLE). Residues 6–65 (PQRKRRGGAVNSRQTQKRTRETTSTPEISLEAEPIELVETVGDEIVDLTCESLEPVVVDL) form a mediates interaction with TRPS1 region. 4 short sequence motifs (SUMO interaction motif) span residues 40-43 (IELV), 50-53 (IVDL), 61-63 (VVV), and 71-74 (VVIV). 2 positions are modified to phosphoserine: S98 and S99. Zn(2+) is bound by residues C136, C139, C158, H160, C163, C166, C177, and C180. An RING-type zinc finger spans residues 136-181 (CPICMDGYSEIVQNGRLIVSTECGHVFCSQCLRDSLKNANTCPTCR).

Homodimer (via RING-type zinc finger domain). Interacts with GSC2. Interacts with AR/the androgen receptor and TBP. Interacts with TCF20. Interacts with PATZ1. Interacts with TRPS1; negatively regulates TRPS1 transcriptional repressor activity. Interacts with PML (isoform PML-1, isoform PML-2, isoform PML-3, isoform PML-4, isoform PML-5 and isoform PML-6). Interacts with PRDM1/Blimp-1. Sumoylated; conjugated by one or two SUMO1 moieties. Post-translationally, autoubiquitinated. Widely expressed with highest levels in testis.

The protein localises to the cytoplasm. The protein resides in the nucleus. Its subcellular location is the nucleoplasm. It is found in the PML body. It carries out the reaction S-ubiquitinyl-[E2 ubiquitin-conjugating enzyme]-L-cysteine + [acceptor protein]-L-lysine = [E2 ubiquitin-conjugating enzyme]-L-cysteine + N(6)-ubiquitinyl-[acceptor protein]-L-lysine.. The protein operates within protein modification; protein ubiquitination. In terms of biological role, E3 ubiquitin-protein ligase which binds polysumoylated chains covalently attached to proteins and mediates 'Lys-6'-, 'Lys-11'-, 'Lys-48'- and 'Lys-63'-linked polyubiquitination of those substrates and their subsequent targeting to the proteasome for degradation. Regulates the degradation of several proteins including PML and the transcriptional activator PEA3. Involved in chromosome alignment and spindle assembly, it regulates the kinetochore CENPH-CENPI-CENPK complex by targeting polysumoylated CENPI to proteasomal degradation. Regulates the cellular responses to hypoxia and heat shock through degradation of respectively EPAS1 and PARP1. Alternatively, it may also bind DNA/nucleosomes and have a more direct role in the regulation of transcription for instance enhancing basal transcription and steroid receptor-mediated transcriptional activation. Catalyzes ubiquitination of sumoylated PARP1 in response to PARP1 trapping to chromatin, leading to PARP1 removal from chromatin by VCP/p97. The polypeptide is E3 ubiquitin-protein ligase RNF4 (Rattus norvegicus (Rat)).